We begin with the raw amino-acid sequence, 541 residues long: uncharacterized protein (541 aa).

The signal sequence occupies residues 1–22 (MQFKYGALIFSGFLGLSIVLAS). Cys23 carries N-palmitoyl cysteine lipidation. Cys23 carries the S-diacylglycerol cysteine lipid modification. Disordered stretches follow at residues 446–468 (APGQSSQKEGGQQQSNSKDNGNL) and 480–514 (KTKTEVKKTEDTQNQGKKAEGTPNQGKKAEGTENQ). Residues 448–460 (GQSSQKEGGQQQS) are compositionally biased toward low complexity. The span at 480–490 (KTKTEVKKTED) shows a compositional bias: basic and acidic residues.

Belongs to the MG185/MG260 family.

The protein resides in the cell membrane. This is an uncharacterized protein from Mycoplasma pneumoniae (strain ATCC 29342 / M129 / Subtype 1) (Mycoplasmoides pneumoniae).